The chain runs to 265 residues: Cytochrome c oxidase subunit 3 (265 aa).

Helical transmembrane passes span 16–36 (PWPI…VMYM), 41–61 (GGAT…FVWW), 84–104 (YGSI…FWAS), 162–182 (AVYA…FQGM), 200–220 (FFLA…FLIV), and 245–265 (WHFV…WGGI).

Belongs to the cytochrome c oxidase subunit 3 family. As to quaternary structure, component of the cytochrome c oxidase (complex IV, CIV), a multisubunit enzyme composed of a catalytic core of 3 subunits and several supernumerary subunits. The complex exists as a monomer or a dimer and forms supercomplexes (SCs) in the inner mitochondrial membrane with ubiquinol-cytochrome c oxidoreductase (cytochrome b-c1 complex, complex III, CIII).

Its subcellular location is the mitochondrion inner membrane. The catalysed reaction is 4 Fe(II)-[cytochrome c] + O2 + 8 H(+)(in) = 4 Fe(III)-[cytochrome c] + 2 H2O + 4 H(+)(out). Functionally, component of the cytochrome c oxidase, the last enzyme in the mitochondrial electron transport chain which drives oxidative phosphorylation. The respiratory chain contains 3 multisubunit complexes succinate dehydrogenase (complex II, CII), ubiquinol-cytochrome c oxidoreductase (cytochrome b-c1 complex, complex III, CIII) and cytochrome c oxidase (complex IV, CIV), that cooperate to transfer electrons derived from NADH and succinate to molecular oxygen, creating an electrochemical gradient over the inner membrane that drives transmembrane transport and the ATP synthase. Cytochrome c oxidase is the component of the respiratory chain that catalyzes the reduction of oxygen to water. Electrons originating from reduced cytochrome c in the intermembrane space (IMS) are transferred via the dinuclear copper A center (CU(A)) of subunit 2 and heme A of subunit 1 to the active site in subunit 1, a binuclear center (BNC) formed by heme A3 and copper B (CU(B)). The BNC reduces molecular oxygen to 2 water molecules using 4 electrons from cytochrome c in the IMS and 4 protons from the mitochondrial matrix. In Aegilops columnaris (Goatgrass), this protein is Cytochrome c oxidase subunit 3 (COX3).